A 345-amino-acid polypeptide reads, in one-letter code: Phosphoribosylformylglycinamidine cyclo-ligase (345 aa).

It belongs to the AIR synthase family.

Its subcellular location is the cytoplasm. It catalyses the reaction 2-formamido-N(1)-(5-O-phospho-beta-D-ribosyl)acetamidine + ATP = 5-amino-1-(5-phospho-beta-D-ribosyl)imidazole + ADP + phosphate + H(+). Its pathway is purine metabolism; IMP biosynthesis via de novo pathway; 5-amino-1-(5-phospho-D-ribosyl)imidazole from N(2)-formyl-N(1)-(5-phospho-D-ribosyl)glycinamide: step 2/2. The protein is Phosphoribosylformylglycinamidine cyclo-ligase of Shewanella sp. (strain MR-7).